A 122-amino-acid polypeptide reads, in one-letter code: Large ribosomal subunit protein uL14 (122 aa).

It belongs to the universal ribosomal protein uL14 family. Part of the 50S ribosomal subunit. Forms a cluster with proteins L3 and L19. In the 70S ribosome, L14 and L19 interact and together make contacts with the 16S rRNA in bridges B5 and B8.

Functionally, binds to 23S rRNA. Forms part of two intersubunit bridges in the 70S ribosome. The sequence is that of Large ribosomal subunit protein uL14 from Methylorubrum populi (strain ATCC BAA-705 / NCIMB 13946 / BJ001) (Methylobacterium populi).